Reading from the N-terminus, the 711-residue chain is Probable cyclic nucleotide-gated ion channel 10 (711 aa).

The Cytoplasmic segment spans residues 1 to 81 (MAFSHDNRVR…QDSFLQNWNK (81 aa)). A helical membrane pass occupies residues 82–102 (IFLFACVVALAIDPLFFYIPI). Topologically, residues 103–116 (VDSARHCLTLDSKL) are extracellular. Residues 117 to 137 (EIAASLLRTLIDAFYIIHIVF) form a helical membrane-spanning segment. Topologically, residues 138–170 (QFRTAYIAPSSRVFGRGELVDDAKAIALKYLSS) are cytoplasmic. A helical transmembrane segment spans residues 171-191 (YFIIDLLSILPLPQIVVLAVI). Topologically, residues 192-204 (PSVNQPVSLLTKD) are extracellular. Residues 205–225 (YLKFSIIAQYVPRILRMYPLY) traverse the membrane as a helical segment. Topologically, residues 226–243 (TEVTRTSGIVTETAWAGA) are cytoplasmic. Residues 244–264 (AWNLSLYMLASHVFGALWYLI) traverse the membrane as a helical segment. The Extracellular segment spans residues 265-366 (SVEREDRCWQ…GQNLQTSKFV (102 aa)). The chain crosses the membrane as a helical span at residues 367 to 387 (GEIIFAISICISGLVLFALLI). Topologically, residues 388–711 (GNMQKYLEST…DFTANHTTDP (324 aa)) are cytoplasmic. A nucleoside 3',5'-cyclic phosphate contacts are provided by residues 473 to 603 (LFEI…TFRF) and E544. The tract at residues 589–604 (FRRLHSKQLQHTFRFY) is calmodulin-binding. The IQ domain occupies 609–638 (RTWSVSFIQAAWRRYCRRKLAKSLRDEEDR). Positions 689–711 (YTLPLLPQKPTEPDFTANHTTDP) are disordered.

Belongs to the cyclic nucleotide-gated cation channel (TC 1.A.1.5) family. As to quaternary structure, homotetramer or heterotetramer.

The protein resides in the cell membrane. In terms of biological role, probable cyclic nucleotide-gated ion channel. In Arabidopsis thaliana (Mouse-ear cress), this protein is Probable cyclic nucleotide-gated ion channel 10 (CNGC10).